The primary structure comprises 468 residues: V-type proton ATPase subunit S1 (468 aa).

The first 35 residues, M1–A35, serve as a signal peptide directing secretion. Positions A36–R228 are excised as a propeptide. At A36 to A417 the chain is on the lumenal side. N167, N258, N271, N294, N301, N348, N355, and N404 each carry an N-linked (GlcNAc...) asparagine glycan. An intrachain disulfide couples C369 to C416. A helical transmembrane segment spans residues G418–F438. At T439 to V468 the chain is on the cytoplasmic side.

This sequence belongs to the vacuolar ATPase subunit S1 family. In terms of assembly, accessory component of the multisubunit proton-transporting vacuolar (V)-ATPase protein pump. Interacts (via N-terminus) with ATP6AP2 (via N-terminus). Interacts with RNASEK. Interacts with TMEM106B (via C-terminus). N-glycosylated.

It is found in the endoplasmic reticulum membrane. The protein resides in the endoplasmic reticulum-Golgi intermediate compartment membrane. Its subcellular location is the cytoplasmic vesicle. It localises to the secretory vesicle. The protein localises to the synaptic vesicle membrane. It is found in the clathrin-coated vesicle membrane. In terms of biological role, accessory subunit of the proton-transporting vacuolar (V)-ATPase protein pump, which is required for luminal acidification of secretory vesicles. Guides the V-type ATPase into specialized subcellular compartments, such as neuroendocrine regulated secretory vesicles or the ruffled border of the osteoclast, thereby regulating its activity. Involved in membrane trafficking and Ca(2+)-dependent membrane fusion. May play a role in the assembly of the V-type ATPase complex. In aerobic conditions, involved in intracellular iron homeostasis, thus triggering the activity of Fe(2+) prolyl hydroxylase (PHD) enzymes, and leading to HIF1A hydroxylation and subsequent proteasomal degradation. In islets of Langerhans cells, may regulate the acidification of dense-core secretory granules. The sequence is that of V-type proton ATPase subunit S1 (ATP6AP1) from Bos taurus (Bovine).